The chain runs to 80 residues: UPF0154 protein SaurJH1_1431 (80 aa).

A helical membrane pass occupies residues 4-24 (WLAIIFIVAALILGLIGGFLL).

This sequence belongs to the UPF0154 family.

It localises to the cell membrane. The protein is UPF0154 protein SaurJH1_1431 of Staphylococcus aureus (strain JH1).